A 365-amino-acid polypeptide reads, in one-letter code: tRNA(Met) cytidine acetate ligase (365 aa).

Residues 7–20 (IAEFNPFHNGHKYL), Gly-96, Asn-152, and Arg-175 contribute to the ATP site.

It belongs to the TmcAL family.

It is found in the cytoplasm. The catalysed reaction is cytidine(34) in elongator tRNA(Met) + acetate + ATP = N(4)-acetylcytidine(34) in elongator tRNA(Met) + AMP + diphosphate. In terms of biological role, catalyzes the formation of N(4)-acetylcytidine (ac(4)C) at the wobble position of elongator tRNA(Met), using acetate and ATP as substrates. First activates an acetate ion to form acetyladenylate (Ac-AMP) and then transfers the acetyl group to tRNA to form ac(4)C34. The chain is tRNA(Met) cytidine acetate ligase from Streptococcus pneumoniae (strain Hungary19A-6).